The primary structure comprises 427 residues: Beta-1,3-galactosyl-O-glycosyl-glycoprotein beta-1,6-N-acetylglucosaminyltransferase (427 aa).

The Cytoplasmic portion of the chain corresponds to 1-9; the sequence is MLRKLWRRK. Residues 5 to 9 form a mediates interaction with GOLPH3 and is necessary and sufficient for localization to the Golgi region; it reads LWRRK. Residues 10–32 form a helical; Signal-anchor for type II membrane protein membrane-spanning segment; it reads LFSFPTKYYFLFLAFSVVTFTVL. The stem region stretch occupies residues 33-121; that stretch reads RIHQKTEFVN…EPLSKEEAGF (89 aa). Topologically, residues 33–427 are lumenal; it reads RIHQKTEFVN…RHKALETLKP (395 aa). N-linked (GlcNAc...) asparagine glycans are attached at residues asparagine 58 and asparagine 95. Cystine bridges form between cysteine 59–cysteine 412, cysteine 100–cysteine 172, cysteine 151–cysteine 199, and cysteine 372–cysteine 380. The catalytic stretch occupies residues 122–427; it reads PIAYSIVVHH…RHKALETLKP (306 aa). UDP-N-acetyl-alpha-D-glucosamine-binding positions include 128 to 130, 155 to 157, and tyrosine 187; these read VVH and DAK. Positions 243, 251, 254, 320, 341, and 358 each coordinate a glycoprotein. Glutamate 320 acts as the Nucleophile in catalysis. UDP-N-acetyl-alpha-D-glucosamine is bound by residues arginine 377 and lysine 400.

The protein belongs to the glycosyltransferase 14 family. In terms of assembly, interacts with GOLPH3; may control GCNT1 retention in the Golgi. In terms of tissue distribution, expressed in tracheal submucosal glands and epithelium (at protein level).

It is found in the golgi apparatus membrane. It carries out the reaction a 3-O-[beta-D-galactosyl-(1-&gt;3)-N-acetyl-alpha-D-galactosaminyl]-L-seryl-[protein] + UDP-N-acetyl-alpha-D-glucosamine = 3-O-{beta-D-galactosyl-(1-&gt;3)-[N-acetyl-beta-D-glucosaminyl-(1-&gt;6)]-N-acetyl-alpha-D-galactosaminyl}-L-seryl-[protein] + UDP + H(+). It catalyses the reaction a 3-O-[beta-D-galactosyl-(1-&gt;3)-N-acetyl-alpha-D-galactosaminyl]-L-threonyl-[protein] + UDP-N-acetyl-alpha-D-glucosamine = a 3-O-{beta-D-galactosyl-(1-&gt;3)-[N-acetyl-beta-D-glucosaminyl-(1-&gt;6)]-N-acetyl-alpha-D-galactosaminyl}-L-threonyl-[protein] + UDP + H(+). The catalysed reaction is a globoside GalGb4Cer + UDP-N-acetyl-alpha-D-glucosamine = a globoside GlcNAc-(beta1-&gt;6)-GalGb4Cer + UDP + H(+). The enzyme catalyses a ganglioside GA1 + UDP-N-acetyl-alpha-D-glucosamine = a ganglioside beta-D-GlcNAc-(1-&gt;6)-GA1 + UDP + H(+). The protein operates within protein modification; protein glycosylation. It participates in glycolipid biosynthesis. In terms of biological role, glycosyltransferase that catalyzes the transfer of an N-acetylglucosamine (GlcNAc) moiety in beta1-6 linkage from UDP-GlcNAc onto mucin-type core 1 O-glycan to form the branched mucin-type core 2 O-glycan. The catalysis is metal ion-independent and occurs with inversion of the anomeric configuration of sugar donor. Selectively involved in synthesis of mucin-type core 2 O-glycans that serve as scaffolds for the display of selectin ligand sialyl Lewis X epitope by myeloid cells, with an impact on homeostasis and recruitment to inflammatory sites. Can also act on glycolipid substrates. Transfers GlcNAc moiety to GalGb4Cer globosides in a reaction step to the synthesis of stage-specific embryonic antigen 1 (SSEA-1) determinant. Can use Galbeta1-3GalNAcalpha1- and Galbeta1-3GalNAcbeta1- oligosaccharide derivatives as acceptor substrates. This Bos taurus (Bovine) protein is Beta-1,3-galactosyl-O-glycosyl-glycoprotein beta-1,6-N-acetylglucosaminyltransferase (GCNT1).